The primary structure comprises 245 residues: 1-(5-phosphoribosyl)-5-[(5-phosphoribosylamino)methylideneamino] imidazole-4-carboxamide isomerase (245 aa).

The Proton acceptor role is filled by Asp8. Asp130 functions as the Proton donor in the catalytic mechanism.

This sequence belongs to the HisA/HisF family.

The protein resides in the cytoplasm. The enzyme catalyses 1-(5-phospho-beta-D-ribosyl)-5-[(5-phospho-beta-D-ribosylamino)methylideneamino]imidazole-4-carboxamide = 5-[(5-phospho-1-deoxy-D-ribulos-1-ylimino)methylamino]-1-(5-phospho-beta-D-ribosyl)imidazole-4-carboxamide. It participates in amino-acid biosynthesis; L-histidine biosynthesis; L-histidine from 5-phospho-alpha-D-ribose 1-diphosphate: step 4/9. The protein is 1-(5-phosphoribosyl)-5-[(5-phosphoribosylamino)methylideneamino] imidazole-4-carboxamide isomerase of Pseudomonas fluorescens (strain ATCC BAA-477 / NRRL B-23932 / Pf-5).